Consider the following 305-residue polypeptide: RxLR effector protein PexRD25 (305 aa).

The N-terminal stretch at 1–16 (MRFLFYMLLACSAVVA) is a signal peptide. The short motif at 44–56 (RLLRDRRSVDEER) is the RxLR-dEER element.

The protein belongs to the RxLR effector family.

It is found in the secreted. Its subcellular location is the host nucleus. The protein resides in the host nucleolus. In terms of biological role, effector that enhances P.infestans colonization of Nicotiana benthamiana leaves. This chain is RxLR effector protein PexRD25, found in Phytophthora infestans (strain T30-4) (Potato late blight agent).